Reading from the N-terminus, the 203-residue chain is ATP-dependent Clp protease proteolytic subunit (203 aa).

The Nucleophile role is filled by Ser107. His132 is a catalytic residue.

This sequence belongs to the peptidase S14 family. As to quaternary structure, fourteen ClpP subunits assemble into 2 heptameric rings which stack back to back to give a disk-like structure with a central cavity, resembling the structure of eukaryotic proteasomes.

The protein resides in the cytoplasm. The catalysed reaction is Hydrolysis of proteins to small peptides in the presence of ATP and magnesium. alpha-casein is the usual test substrate. In the absence of ATP, only oligopeptides shorter than five residues are hydrolyzed (such as succinyl-Leu-Tyr-|-NHMec, and Leu-Tyr-Leu-|-Tyr-Trp, in which cleavage of the -Tyr-|-Leu- and -Tyr-|-Trp bonds also occurs).. In terms of biological role, cleaves peptides in various proteins in a process that requires ATP hydrolysis. Has a chymotrypsin-like activity. Plays a major role in the degradation of misfolded proteins. This chain is ATP-dependent Clp protease proteolytic subunit, found in Shewanella frigidimarina (strain NCIMB 400).